We begin with the raw amino-acid sequence, 386 residues long: Protein lin-8 (386 aa).

The tract at residues 175–285 (LGLEARRASK…FSQQYGGGGS (111 aa)) is sufficient for interaction with lin-35. Residues 212-240 (EEPYEETGSNWSDPAPEPSQSKSQSPEAK) are disordered. Positions 229–240 (PSQSKSQSPEAK) are enriched in low complexity.

It belongs to the lin-8 family. Interacts with lin-35 (via C-terminus). In terms of tissue distribution, widely expressed throughout development, with particularly prominent expression in the germline and in neuronal nuclei of the head (at protein level).

It localises to the nucleus. Its function is as follows. Acts as a synthetic multivulva class A (synMuvA) protein and redundantly inhibits lin-3/EGF expression to prevent inappropriate vulva induction. The sequence is that of Protein lin-8 from Caenorhabditis elegans.